Consider the following 156-residue polypeptide: Transcription antitermination protein NusB (156 aa).

Belongs to the NusB family.

Functionally, involved in transcription antitermination. Required for transcription of ribosomal RNA (rRNA) genes. Binds specifically to the boxA antiterminator sequence of the ribosomal RNA (rrn) operons. This chain is Transcription antitermination protein NusB, found in Bartonella quintana (strain Toulouse) (Rochalimaea quintana).